An 820-amino-acid polypeptide reads, in one-letter code: SART-1 family protein DOT2 (820 aa).

Basic and acidic residues-rich tracts occupy residues 1–156, 210–219, and 426–445; these read MEVE…DNRG, EEKRNAEKQR, and LGSRKDGRRQAMKEEKERIE. 8 disordered regions span residues 1–177, 210–248, 420–445, 523–544, 564–617, 657–678, 729–748, and 762–820; these read MEVE…SALD, EEKRNAEKQRAQQLSRIFEEQDNLNQGENEDGEDGEHLS, GLGAEDLGSRKDGRRQAMKEEKERIE, SSTNQTTDDNTTTGDETQENTV, KPES…PDEN, KLVGIVDDDGGKESKDKESKDR, KLKQMKNSDTPSQSVQRMRE, and GHVK…RPKP. Phosphoserine is present on Ser22. Coiled coils occupy residues 58–120, 171–235, and 433–510; these read RDKE…EKEK, KEAS…NLNQ, and RRQA…KEEA. A compositionally biased stretch (low complexity) spans 525–543; sequence TNQTTDDNTTTGDETQENT. Residues 582–591 show a composition bias toward basic and acidic residues; that stretch reads VEVKEEHPDG. Acidic residues predominate over residues 596 to 606; the sequence is NDTDMDAAEDS. Basic and acidic residues-rich tracts occupy residues 607-617 and 665-678; these read SDTKEITPDEN and DGGKESKDKESKDR. Polar residues-rich tracts occupy residues 733 to 744 and 767 to 776; these read MKNSDTPSQSVQ and GQTSDPQSGF. Residues 792 to 807 are compositionally biased toward basic and acidic residues; sequence GDRKVEHFLGIKRKSE.

Belongs to the SNU66/SART1 family. In terms of tissue distribution, expressed in lateral root cap, columella, meristem and quiescent center (QC). Expressed in young leaves.

Its subcellular location is the nucleus. In terms of biological role, plays a role in root, shoot and flower development. Probably required for normal root and shoot meristem organization and maintenance and the proper expression of PIN and PLT genes. Involved in leaf vasculature patterning. The polypeptide is SART-1 family protein DOT2 (Arabidopsis thaliana (Mouse-ear cress)).